The primary structure comprises 198 residues: Recombination protein RecR (198 aa).

A C4-type zinc finger spans residues 57–72 (CEKCNTFTEAQICEVC). Residues 80–175 (TLLCVVETPA…SVTRLARGVP (96 aa)) enclose the Toprim domain.

Belongs to the RecR family.

Its function is as follows. May play a role in DNA repair. It seems to be involved in an RecBC-independent recombinational process of DNA repair. It may act with RecF and RecO. The sequence is that of Recombination protein RecR from Paraburkholderia phymatum (strain DSM 17167 / CIP 108236 / LMG 21445 / STM815) (Burkholderia phymatum).